A 248-amino-acid chain; its full sequence is tRNA N(3)-methylcytidine methyltransferase trm141 (248 aa).

S-adenosyl-L-methionine is bound by residues Trp23, Tyr27, Gly63, Asp86, Asp112, and Ile133.

It belongs to the methyltransferase superfamily. METL family.

The protein resides in the cytoplasm. The protein localises to the nucleus. The enzyme catalyses cytidine(32) in tRNA(Ser) + S-adenosyl-L-methionine = N(3)-methylcytidine(32) in tRNA(Ser) + S-adenosyl-L-homocysteine + H(+). S-adenosyl-L-methionine-dependent methyltransferase that mediates N(3)-methylcytidine modification of residue 32 of the tRNA anticodon loop of tRNA(Ser). N(3)-methylcytidine methylation by trm141 requires the formation of N(6)-dimethylallyladenosine(37) (i6A37) by tit1 as prerequisite. Does not catalyze N(3)-methylcytidine modification of tRNA(Thr). This Schizosaccharomyces pombe (strain 972 / ATCC 24843) (Fission yeast) protein is tRNA N(3)-methylcytidine methyltransferase trm141.